Reading from the N-terminus, the 496-residue chain is Cytochrome P450 71D18 (496 aa).

A helical; Signal-anchor for type II membrane protein transmembrane segment spans residues 2-22; it reads ELDLLSAIIILVATYIVSLLI. Cys-436 lines the heme pocket.

It belongs to the cytochrome P450 family. It depends on heme as a cofactor.

The protein localises to the endoplasmic reticulum membrane. The enzyme catalyses (4S)-limonene + reduced [NADPH--hemoprotein reductase] + O2 = (1S,5R)-carveol + oxidized [NADPH--hemoprotein reductase] + H2O + H(+). Hydroxylates (-)-(4S)-limonene to (-)-trans-carveol, a precursor of (-)-carvone. Fluorinated substrate analogs are hydroxylated with the same regio- and stereochemistry. The protein is Cytochrome P450 71D18 (CYP71D18) of Mentha gracilis (Gingermint).